The primary structure comprises 98 residues: Cystatin-B (98 aa).

Met-1 is modified (N-acetylmethionine). The short motif at 46–50 is the Secondary area of contact element; the sequence is QVVAG.

Belongs to the cystatin family. In terms of assembly, able to form dimers stabilized by noncovalent forces.

It is found in the cytoplasm. It localises to the nucleus. This is an intracellular thiol proteinase inhibitor. Tightly binding reversible inhibitor of cathepsins L, H and B. The chain is Cystatin-B (CSTB) from Pan troglodytes (Chimpanzee).